The primary structure comprises 156 residues: 6,7-dimethyl-8-ribityllumazine synthase (156 aa).

5-amino-6-(D-ribitylamino)uracil-binding positions include phenylalanine 22, 57 to 59 (AYE), and 81 to 83 (TVI). 86-87 (GT) provides a ligand contact to (2S)-2-hydroxy-3-oxobutyl phosphate. The active-site Proton donor is the histidine 89. Phenylalanine 114 contributes to the 5-amino-6-(D-ribitylamino)uracil binding site. (2S)-2-hydroxy-3-oxobutyl phosphate is bound at residue arginine 128.

Belongs to the DMRL synthase family. As to quaternary structure, forms an icosahedral capsid composed of 60 subunits, arranged as a dodecamer of pentamers.

The catalysed reaction is (2S)-2-hydroxy-3-oxobutyl phosphate + 5-amino-6-(D-ribitylamino)uracil = 6,7-dimethyl-8-(1-D-ribityl)lumazine + phosphate + 2 H2O + H(+). The protein operates within cofactor biosynthesis; riboflavin biosynthesis; riboflavin from 2-hydroxy-3-oxobutyl phosphate and 5-amino-6-(D-ribitylamino)uracil: step 1/2. Catalyzes the formation of 6,7-dimethyl-8-ribityllumazine by condensation of 5-amino-6-(D-ribitylamino)uracil with 3,4-dihydroxy-2-butanone 4-phosphate. This is the penultimate step in the biosynthesis of riboflavin. The sequence is that of 6,7-dimethyl-8-ribityllumazine synthase from Salmonella heidelberg (strain SL476).